The following is a 181-amino-acid chain: Acireductone dioxygenase (181 aa).

Fe(2+) is bound by residues His-97, His-99, Glu-103, and His-141. Residues His-97, His-99, Glu-103, and His-141 each contribute to the Ni(2+) site.

The protein belongs to the acireductone dioxygenase (ARD) family. In terms of assembly, monomer. Fe(2+) is required as a cofactor. Requires Ni(2+) as cofactor.

The catalysed reaction is 1,2-dihydroxy-5-(methylsulfanyl)pent-1-en-3-one + O2 = 3-(methylsulfanyl)propanoate + CO + formate + 2 H(+). It catalyses the reaction 1,2-dihydroxy-5-(methylsulfanyl)pent-1-en-3-one + O2 = 4-methylsulfanyl-2-oxobutanoate + formate + 2 H(+). The protein operates within amino-acid biosynthesis; L-methionine biosynthesis via salvage pathway; L-methionine from S-methyl-5-thio-alpha-D-ribose 1-phosphate: step 5/6. Catalyzes 2 different reactions between oxygen and the acireductone 1,2-dihydroxy-3-keto-5-methylthiopentene (DHK-MTPene) depending upon the metal bound in the active site. Fe-containing acireductone dioxygenase (Fe-ARD) produces formate and 2-keto-4-methylthiobutyrate (KMTB), the alpha-ketoacid precursor of methionine in the methionine recycle pathway. Ni-containing acireductone dioxygenase (Ni-ARD) produces methylthiopropionate, carbon monoxide and formate, and does not lie on the methionine recycle pathway. The polypeptide is Acireductone dioxygenase (Pseudomonas paraeruginosa (strain DSM 24068 / PA7) (Pseudomonas aeruginosa (strain PA7))).